Here is a 354-residue protein sequence, read N- to C-terminus: Soluble interferon alpha/beta receptor OPG204 (354 aa).

Residues Met-1–Phe-22 form the signal peptide. 2 consecutive Ig-like C2-type domains span residues Ile-68 to Val-150 and Pro-158 to Ser-240. 2 cysteine pairs are disulfide-bonded: Cys-76–Cys-132 and Cys-175–Cys-224. N-linked (GlcNAc...) asparagine; by host glycans are attached at residues Asn-120, Asn-124, Asn-185, Asn-272, and Asn-324. One can recognise an Ig-like V-type domain in the interval Pro-249–Thr-348. Cys-275 and Cys-336 form a disulfide bridge.

Belongs to the interleukin-1 receptor family. As to quaternary structure, interacts with host IFNA1.

It localises to the secreted. Counteracts the antiviral effects of host IFN-alpha/beta and key IFN-inducible proteins involved in viral RNA degradation suxh as host OAS1. Acts as a soluble IFN-alpha receptor and thus inhibits the interaction between host IFN-alpha and its receptor. The sequence is that of Soluble interferon alpha/beta receptor OPG204 (OPG204) from Homo sapiens (Human).